We begin with the raw amino-acid sequence, 167 residues long: 2-C-methyl-D-erythritol 2,4-cyclodiphosphate synthase (167 aa).

The a divalent metal cation site is built by Asp-11 and His-13. 4-CDP-2-C-methyl-D-erythritol 2-phosphate-binding positions include 11–13 (DIH) and 37–38 (HS). His-45 serves as a coordination point for a divalent metal cation. 4-CDP-2-C-methyl-D-erythritol 2-phosphate is bound by residues 59 to 61 (DIG), 64 to 68 (FSDTD), 103 to 109 (AQAPKMA), and Arg-145.

The protein belongs to the IspF family. Homotrimer. The cofactor is a divalent metal cation.

It carries out the reaction 4-CDP-2-C-methyl-D-erythritol 2-phosphate = 2-C-methyl-D-erythritol 2,4-cyclic diphosphate + CMP. The protein operates within isoprenoid biosynthesis; isopentenyl diphosphate biosynthesis via DXP pathway; isopentenyl diphosphate from 1-deoxy-D-xylulose 5-phosphate: step 4/6. Functionally, involved in the biosynthesis of isopentenyl diphosphate (IPP) and dimethylallyl diphosphate (DMAPP), two major building blocks of isoprenoid compounds. Catalyzes the conversion of 4-diphosphocytidyl-2-C-methyl-D-erythritol 2-phosphate (CDP-ME2P) to 2-C-methyl-D-erythritol 2,4-cyclodiphosphate (ME-CPP) with a corresponding release of cytidine 5-monophosphate (CMP). In Nitrosomonas eutropha (strain DSM 101675 / C91 / Nm57), this protein is 2-C-methyl-D-erythritol 2,4-cyclodiphosphate synthase.